The sequence spans 440 residues: Chorismate synthase 1, chloroplastic (440 aa).

A chloroplast-targeting transit peptide spans 1-54; the sequence is MASFVPTKQFVGASSSSDIGSSRLVSLQLPSKFSSSNFHLPSRPSQLKRLEIQA. Positions 100–147 are disordered; that stretch reads RRRPGQSRITTPRKETDTCKISSGTADGLTTGSPIKVEVPNTDQRGND. Over residues 118-132 the composition is skewed to polar residues; the sequence is CKISSGTADGLTTGS.

It belongs to the chorismate synthase family. As to quaternary structure, homotetramer. It depends on FMNH2 as a cofactor. As to expression, predominantly expressed in flowers and roots and, to a lesser extent, in stems, leaves, and cotyledons.

Its subcellular location is the plastid. It localises to the chloroplast. The catalysed reaction is 5-O-(1-carboxyvinyl)-3-phosphoshikimate = chorismate + phosphate. It participates in metabolic intermediate biosynthesis; chorismate biosynthesis; chorismate from D-erythrose 4-phosphate and phosphoenolpyruvate: step 7/7. In terms of biological role, catalyzes the last common step of the biosynthesis of aromatic amino acids, produced via the shikimic acid pathway. The chain is Chorismate synthase 1, chloroplastic (CS1) from Solanum lycopersicum (Tomato).